Here is a 253-residue protein sequence, read N- to C-terminus: Imidazole glycerol phosphate synthase subunit HisF (253 aa).

Catalysis depends on residues Asp-11 and Asp-130.

This sequence belongs to the HisA/HisF family. Heterodimer of HisH and HisF.

Its subcellular location is the cytoplasm. The enzyme catalyses 5-[(5-phospho-1-deoxy-D-ribulos-1-ylimino)methylamino]-1-(5-phospho-beta-D-ribosyl)imidazole-4-carboxamide + L-glutamine = D-erythro-1-(imidazol-4-yl)glycerol 3-phosphate + 5-amino-1-(5-phospho-beta-D-ribosyl)imidazole-4-carboxamide + L-glutamate + H(+). It functions in the pathway amino-acid biosynthesis; L-histidine biosynthesis; L-histidine from 5-phospho-alpha-D-ribose 1-diphosphate: step 5/9. Its function is as follows. IGPS catalyzes the conversion of PRFAR and glutamine to IGP, AICAR and glutamate. The HisF subunit catalyzes the cyclization activity that produces IGP and AICAR from PRFAR using the ammonia provided by the HisH subunit. The protein is Imidazole glycerol phosphate synthase subunit HisF of Gluconobacter oxydans (strain 621H) (Gluconobacter suboxydans).